The following is a 623-amino-acid chain: Aspartate--tRNA(Asp/Asn) ligase (623 aa).

Residue Glu175 coordinates L-aspartate. Residues 199–202 (QQYK) are aspartate. Positions 221 and 483 each coordinate L-aspartate. 221–223 (RDE) contributes to the ATP binding site. Glu517 contributes to the ATP binding site. Arg524 serves as a coordination point for L-aspartate. 569-572 (GVDR) serves as a coordination point for ATP.

The protein belongs to the class-II aminoacyl-tRNA synthetase family. Type 1 subfamily. In terms of assembly, homodimer.

Its subcellular location is the cytoplasm. The catalysed reaction is tRNA(Asx) + L-aspartate + ATP = L-aspartyl-tRNA(Asx) + AMP + diphosphate. Aspartyl-tRNA synthetase with relaxed tRNA specificity since it is able to aspartylate not only its cognate tRNA(Asp) but also tRNA(Asn). Reaction proceeds in two steps: L-aspartate is first activated by ATP to form Asp-AMP and then transferred to the acceptor end of tRNA(Asp/Asn). The sequence is that of Aspartate--tRNA(Asp/Asn) ligase from Xanthobacter autotrophicus (strain ATCC BAA-1158 / Py2).